The primary structure comprises 443 residues: MKIGIINTKIRTVFSAFACMIAASLVCTMPARAVVEININKGVIEPLPIAITDFLSADQLGSNITSVIAADLERSGLFAPIDKGAFIEKISNPDAAPRFEDWKVINAQALVTGRITKQPDGRLKAEFHLWDTFGGQQMIGQQFFTTPDNWRRVAHIIADAIYERLTGDKGYFDTRVVFVDESGPAQKRVKRLAIMDQDGANVRFISDGRALSLTPRFSPNRQEVTYMSFEGGSPKVYLLQLETGQRELVGNFPGMTIAPRFSPDGQKVVMSLLQDDGSANIYTMDLRNRTTTRLTSSQAIDTGASYSPDGSQIVFTSDRGGRPQLYVMGADGSNPRRISMGDGSYSTPVWSPRGDLIAFTKQSQGQFSIGVMKTDGSGERLLTSGFHNEGPTWAPNGRVLMFFRKAAGAGGPKLFTIDLTGRNERQIQTPNFASDPAWSPLLE.

A signal peptide spans 1–33 (MKIGIINTKIRTVFSAFACMIAASLVCTMPARA).

Belongs to the TolB family. As to quaternary structure, the Tol-Pal system is composed of five core proteins: the inner membrane proteins TolA, TolQ and TolR, the periplasmic protein TolB and the outer membrane protein Pal. They form a network linking the inner and outer membranes and the peptidoglycan layer.

It localises to the periplasm. In terms of biological role, part of the Tol-Pal system, which plays a role in outer membrane invagination during cell division and is important for maintaining outer membrane integrity. The sequence is that of Tol-Pal system protein TolB from Brucella suis biovar 1 (strain 1330).